Here is a 220-residue protein sequence, read N- to C-terminus: ATP-dependent Clp protease proteolytic subunit (220 aa).

The active-site Nucleophile is the Ser-125. His-150 is an active-site residue.

This sequence belongs to the peptidase S14 family. Fourteen ClpP subunits assemble into 2 heptameric rings which stack back to back to give a disk-like structure with a central cavity, resembling the structure of eukaryotic proteasomes.

It is found in the cytoplasm. The catalysed reaction is Hydrolysis of proteins to small peptides in the presence of ATP and magnesium. alpha-casein is the usual test substrate. In the absence of ATP, only oligopeptides shorter than five residues are hydrolyzed (such as succinyl-Leu-Tyr-|-NHMec, and Leu-Tyr-Leu-|-Tyr-Trp, in which cleavage of the -Tyr-|-Leu- and -Tyr-|-Trp bonds also occurs).. Its function is as follows. Cleaves peptides in various proteins in a process that requires ATP hydrolysis. Has a chymotrypsin-like activity. Plays a major role in the degradation of misfolded proteins. The protein is ATP-dependent Clp protease proteolytic subunit of Bacteroides fragilis (strain YCH46).